Here is a 510-residue protein sequence, read N- to C-terminus: 2,3-bisphosphoglycerate-independent phosphoglycerate mutase (510 aa).

Mn(2+)-binding residues include Asp-13 and Ser-63. Residue Ser-63 is the Phosphoserine intermediate of the active site. Residues His-124, 154–155, Arg-186, Arg-192, 262–265, and Lys-334 contribute to the substrate site; these read RD and RADR. Mn(2+)-binding residues include Asp-401, His-405, Asp-442, His-443, and His-461.

It belongs to the BPG-independent phosphoglycerate mutase family. As to quaternary structure, monomer. Requires Mn(2+) as cofactor.

It carries out the reaction (2R)-2-phosphoglycerate = (2R)-3-phosphoglycerate. Its pathway is carbohydrate degradation; glycolysis; pyruvate from D-glyceraldehyde 3-phosphate: step 3/5. Catalyzes the interconversion of 2-phosphoglycerate and 3-phosphoglycerate. The chain is 2,3-bisphosphoglycerate-independent phosphoglycerate mutase from Vibrio atlanticus (strain LGP32) (Vibrio splendidus (strain Mel32)).